The sequence spans 217 residues: MGAQGFFLAVEGIDGSGKSGIVRSLAAHLGAEGRDVLVTREPGGTPEGEAIRGLVLAGADEAWDPMAELLLMTAARVQHVRRVIAPALAQGRVVISDRYAGSTLAYQGTGRGLSEAFIRTLHAEATGDLWPDLTLVLDLEAGIGLARSRRRLTGETLDEGRFESLDLAFHERIRAAFLAQAARDPGRHAVIDASGTPEEVQARACAALAPFLAQAPV.

An ATP-binding site is contributed by 12 to 19; it reads GIDGSGKS.

Belongs to the thymidylate kinase family.

It catalyses the reaction dTMP + ATP = dTDP + ADP. Phosphorylation of dTMP to form dTDP in both de novo and salvage pathways of dTTP synthesis. This chain is Thymidylate kinase, found in Cereibacter sphaeroides (strain ATCC 17023 / DSM 158 / JCM 6121 / CCUG 31486 / LMG 2827 / NBRC 12203 / NCIMB 8253 / ATH 2.4.1.) (Rhodobacter sphaeroides).